The sequence spans 98 residues: MSMVYANIFLAFIMSLMGLLMYRSHLMSSLLCLEGMMLSLFVMMTVTILNNHFTLASMTPIILLVFAACEAALGLSLLVMVSNTYGTDYVQNLNLLPC.

3 consecutive transmembrane segments (helical) span residues 1 to 21 (MSMV…GLLM), 29 to 49 (SLLC…VTIL), and 61 to 81 (IILL…LVMV).

It belongs to the complex I subunit 4L family. Core subunit of respiratory chain NADH dehydrogenase (Complex I) which is composed of 45 different subunits.

It localises to the mitochondrion inner membrane. The enzyme catalyses a ubiquinone + NADH + 5 H(+)(in) = a ubiquinol + NAD(+) + 4 H(+)(out). Core subunit of the mitochondrial membrane respiratory chain NADH dehydrogenase (Complex I) which catalyzes electron transfer from NADH through the respiratory chain, using ubiquinone as an electron acceptor. Part of the enzyme membrane arm which is embedded in the lipid bilayer and involved in proton translocation. This chain is NADH-ubiquinone oxidoreductase chain 4L (MT-ND4L), found in Erignathus barbatus (Bearded seal).